Consider the following 426-residue polypeptide: 26S proteasome regulatory subunit 7 homolog A (426 aa).

209 to 216 (GPPGTGKT) lines the ATP pocket. Residues Lys-400 and Lys-415 each participate in a glycyl lysine isopeptide (Lys-Gly) (interchain with G-Cter in ubiquitin) cross-link.

This sequence belongs to the AAA ATPase family. Component of the 19S regulatory particle (RP/PA700) base subcomplex of the 26S proteasome. The 26S proteasome is composed of a core protease (CP), known as the 20S proteasome, capped at one or both ends by the 19S regulatory particle (RP/PA700). The RP/PA700 complex is composed of at least 17 different subunits in two subcomplexes, the base and the lid, which form the portions proximal and distal to the 20S proteolytic core, respectively.

The protein localises to the cytoplasm. It localises to the nucleus. In terms of biological role, the 26S proteasome is involved in the ATP-dependent degradation of ubiquitinated proteins. The regulatory (or ATPase) complex confers ATP dependency and substrate specificity to the 26S complex. The protein is 26S proteasome regulatory subunit 7 homolog A (RPT1A) of Arabidopsis thaliana (Mouse-ear cress).